Consider the following 171-residue polypeptide: Co-chaperone protein HscB homolog (171 aa).

Positions 2–74 (NHFELFGLPN…VSRAEYILSE (73 aa)) constitute a J domain.

The protein belongs to the HscB family. As to quaternary structure, interacts with HscA and stimulates its ATPase activity.

In terms of biological role, co-chaperone involved in the maturation of iron-sulfur cluster-containing proteins. Seems to help targeting proteins to be folded toward HscA. The sequence is that of Co-chaperone protein HscB homolog from Aliivibrio fischeri (strain ATCC 700601 / ES114) (Vibrio fischeri).